The chain runs to 287 residues: Pirin-1 (287 aa).

N-acetylthreonine is present on Thr2.

This sequence belongs to the pirin family. Interacts with the G protein alpha-1 subunit GPA1. Interacts with NFYB6 and NFYB9.

Its subcellular location is the nucleus. Its function is as follows. Involved in abscisic acid signal transduction. Plays a role in seed germination and early seedling development. Involved in the blue light (BL) signaling. This chain is Pirin-1 (PRN1), found in Arabidopsis thaliana (Mouse-ear cress).